Here is a 300-residue protein sequence, read N- to C-terminus: Putative zinc finger protein 705EP (300 aa).

Positions 7–78 (VTFEDVAIDF…GREFLQDQNP (72 aa)) constitute a KRAB domain. The C2H2-type 1; degenerate zinc-finger motif lies at 172–194 (YQCNLCEKAYTNCFHLRRPKMTH). 2 consecutive C2H2-type zinc fingers follow at residues 200-222 (YTCH…EKTH) and 228-250 (YKCH…ERTH). Residues 256-278 (YECDNSGKAFSQSSGFRGNKIIH) form a C2H2-type 4; degenerate zinc finger.

It belongs to the krueppel C2H2-type zinc-finger protein family.

Its subcellular location is the nucleus. Functionally, may be involved in transcriptional regulation. In Homo sapiens (Human), this protein is Putative zinc finger protein 705EP.